The primary structure comprises 229 residues: MKSAEWFEASTEEERVEIQRKVARKVRLEPLDDVDAVAGVDVSYRGEEYRAAAVVLDPETYEVLDRRVVHGTTDVPYEPGFLAFREGPPALEALEGLDFDLLFVHGHGVAHPRRAGLASHLGVALDVPTIGVARRPLVGRSKEEPSRIGDTTPLVHRGEVVGYLVRTDAEARPVVVSPGHRCNLEDAVRWTLRLVRVGKWPEPLRLADLLSRRGASRVEGESRGAGVRR.

Belongs to the endonuclease V family.

It is found in the cytoplasm. It catalyses the reaction Endonucleolytic cleavage at apurinic or apyrimidinic sites to products with a 5'-phosphate.. Functionally, DNA repair enzyme involved in the repair of deaminated bases. Selectively cleaves double-stranded DNA at the second phosphodiester bond 3' to a deoxyinosine leaving behind the intact lesion on the nicked DNA. The chain is Endonuclease V from Methanopyrus kandleri (strain AV19 / DSM 6324 / JCM 9639 / NBRC 100938).